Here is a 331-residue protein sequence, read N- to C-terminus: Centriolar satellite-associated tubulin polyglutamylase complex regulator 1 (331 aa).

The tract at residues 1-111 (MLSPERLALP…HCLLQLLCPD (111 aa)) is required for interaction with PCM1. The tract at residues 1 to 225 (MLSPERLALP…SCPPPALVKE (225 aa)) is required for interaction with TPGS1, LRRC49, and TTLL1. The segment at 112–331 (FPLELTQKAA…STEETDESET (220 aa)) is required for interaction with TPGS2. Residues 288–331 (SPEASCLPSRTPPRVGSPWRPLHHSRKVDGESDGSTEETDESET) are disordered. Acidic residues predominate over residues 318-331 (ESDGSTEETDESET). The residue at position 319 (Ser319) is a Phosphoserine.

It belongs to the CSTPP1 family. As to quaternary structure, interacts with PCM1. Interacts with TTLL1, TPGS1, TPGS2 and LRRC49; the interactions link CSTPP1 to the complex TPGC. Binds to alpha-tubulin.

Its subcellular location is the cytoplasm. It localises to the cytoskeleton. The protein localises to the microtubule organizing center. The protein resides in the centrosome. It is found in the centriolar satellite. Regulator of the tubulin polyglutamylase complex (TPGC) that controls cytoskeletal organization, nuclear shape, and cilium disassembly by balancing microtubule and actin assembly. Regulates the assembly and stability of the TPGC and thereby modulates polyglutamylation of the microtubule, which antagonizes MAP4 binding. The polypeptide is Centriolar satellite-associated tubulin polyglutamylase complex regulator 1 (Homo sapiens (Human)).